The following is a 134-amino-acid chain: Profilin-2 (134 aa).

An intrachain disulfide couples cysteine 13 to cysteine 118. Residues 84–100 (AVIRGKKGSGGITIKKT) carry the Involved in PIP2 interaction motif. Phosphothreonine is present on threonine 114.

This sequence belongs to the profilin family. Occurs in many kinds of cells as a complex with monomeric actin in a 1:1 ratio. Post-translationally, phosphorylated by MAP kinases.

The protein localises to the cytoplasm. It is found in the cytoskeleton. Binds to actin and affects the structure of the cytoskeleton. At high concentrations, profilin prevents the polymerization of actin, whereas it enhances it at low concentrations. The protein is Profilin-2 of Olea europaea (Common olive).